Here is a 941-residue protein sequence, read N- to C-terminus: MSDHSTFADRHIGLDSQAVATMLAVIGVDSLDDLAVKAVPAGILDTLTDTGAAPGLDSLPPAASEAEALAELRALADANTVAVSMIGQGYYDTHTPPVLLRNIIENPAWYTAYTPYQPEISQGRLEALLNFQTLVTDLTGLEIANASMLDEGTAAAEAMTLMHRAARGPVKRVVVDADVFTQTAAVLATRAKPLGIEIVTADLRAGLPDGEFFGAIAQLPGASGRITDWSALVQQAHDRGALVAVGADLLALTLIAPPGEIGADVAFGTTQRFGVPMGFGGPHAGYLAVHAKHARQLPGRLVGVSVDSDGTPAYRLALQTREQHIRRDKATSNICTAQVLLAVLAAMYASYHGAGGLTAIARRVHAHAEAIAGALGDALVHDKYFDTVLARVPGRADEVLARAKANGINLWRVDADHVSVACDEATTDTHVAVVLDAFGVAAAAPAHADIATRTSEFLTHPAFTQYRTETSMMRYLRALADKDIALDRSMIPLGSCTMKLNAAAEMESITWPEFGRQHPFAPASDTAGLRQLVADLQSWLVLITGYDAVSLQPNAGSQGEYAGLLAIHEYHASRGEPHRDICLIPSSAHGTNAASAALAGMRVVVVDCHDNGDVDLDDLRAKVGEHAERLSALMITYPSTHGVYEHDIAEICAAVHDAGGQVYVDGANLNALVGLARPGKFGGDVSHLNLHKTFCIPHGGGGPGVGPVAVRAHLAPFLPGHPFAPELPKGYPVSSAPYGSASILPITWAYIRMMGAEGLRAASLTAITSANYIARRLDEYYPVLYTGENGMVAHECILDLRGITKLTGITVDDVAKRLADYGFHAPTMSFPVAGTLMVEPTESESLAEVDAFCEAMIGIRAEIDKVGAGEWPVDDNPLRGAPHTAQCLLASDWDHPYTREQAAYPLGTAFRPKVWPAVRRIDGAYGDRNLVCSCPPVEAFA.

Lysine 692 carries the post-translational modification N6-(pyridoxal phosphate)lysine.

Belongs to the GcvP family. In terms of assembly, the glycine cleavage system is composed of four proteins: P, T, L and H. The cofactor is pyridoxal 5'-phosphate.

The catalysed reaction is N(6)-[(R)-lipoyl]-L-lysyl-[glycine-cleavage complex H protein] + glycine + H(+) = N(6)-[(R)-S(8)-aminomethyldihydrolipoyl]-L-lysyl-[glycine-cleavage complex H protein] + CO2. The glycine cleavage system catalyzes the degradation of glycine. The P protein binds the alpha-amino group of glycine through its pyridoxal phosphate cofactor; CO(2) is released and the remaining methylamine moiety is then transferred to the lipoamide cofactor of the H protein. In Mycobacterium bovis (strain ATCC BAA-935 / AF2122/97), this protein is Glycine dehydrogenase (decarboxylating).